The primary structure comprises 597 residues: C4b-binding protein alpha chain (597 aa).

A signal peptide spans 1-48 (MHPPKTPSGALHRKRKMAAWPFSRLWKVSDPILFQMTLIAALLPAVLG). Sushi domains are found at residues 49–110 (NCGP…FCIY), 111–172 (KRCR…QCEI), 173–236 (VKCK…TCEK), 237–296 (ITCR…ACEP), 297–362 (NSCI…GCEA), 363–424 (LCCP…SCGD), 425–482 (ICNF…QCKA), and 483–540 (LCRK…KCEW). Intrachain disulfides connect Cys50/Cys96, Cys81/Cys108, Cys113/Cys154, Cys140/Cys170, Cys175/Cys217, Cys203/Cys234, Cys239/Cys281, Cys267/Cys294, Cys299/Cys348, Cys332/Cys360, Cys365/Cys409, Cys399/Cys422, Cys426/Cys468, Cys454/Cys480, Cys484/Cys525, and Cys511/Cys538. An N-linked (GlcNAc...) asparagine glycan is attached at Asn221. 2 N-linked (GlcNAc...) asparagine glycosylation sites follow: Asn506 and Asn528.

In terms of assembly, disulfide-linked complex of alpha and beta chains of 3 possible sorts: a 570 kDa complex of 7 alpha chains and 1 beta chain, a 530 kDa homoheptamer of alpha chains or a 500 kDa complex of 6 alpha chains and 1 beta chain. The central body of the alpha chain homomer supports tentacles, each with the binding site for C4b at the end. As to quaternary structure, (Microbial infection) Interacts with Staphylococcus aureus protein SdrE; this interaction inhibits complement-mediated bacterial opsonization. Chylomicrons in the plasma.

It localises to the secreted. Controls the classical pathway of complement activation. It binds as a cofactor to C3b/C4b inactivator (C3bINA), which then hydrolyzes the complement fragment C4b. It also accelerates the degradation of the C4bC2a complex (C3 convertase) by dissociating the complement fragment C2a. Alpha chain binds C4b. It also interacts with anticoagulant protein S and with serum amyloid P component. This is C4b-binding protein alpha chain (C4BPA) from Homo sapiens (Human).